Reading from the N-terminus, the 217-residue chain is Pyridoxine/pyridoxamine 5'-phosphate oxidase (217 aa).

Substrate-binding positions include 13 to 16 (RRDY) and lysine 71. Residues 66 to 71 (RIVLLK), 81 to 82 (YT), lysine 88, and glutamine 110 each bind FMN. The substrate site is built by tyrosine 128, arginine 132, and serine 136. Residues 145–146 (QS) and tryptophan 190 each bind FMN. Substrate is bound at residue 196–198 (RLH). Arginine 200 lines the FMN pocket.

It belongs to the pyridoxamine 5'-phosphate oxidase family. In terms of assembly, homodimer. It depends on FMN as a cofactor.

The catalysed reaction is pyridoxamine 5'-phosphate + O2 + H2O = pyridoxal 5'-phosphate + H2O2 + NH4(+). The enzyme catalyses pyridoxine 5'-phosphate + O2 = pyridoxal 5'-phosphate + H2O2. Its pathway is cofactor metabolism; pyridoxal 5'-phosphate salvage; pyridoxal 5'-phosphate from pyridoxamine 5'-phosphate: step 1/1. It participates in cofactor metabolism; pyridoxal 5'-phosphate salvage; pyridoxal 5'-phosphate from pyridoxine 5'-phosphate: step 1/1. Functionally, catalyzes the oxidation of either pyridoxine 5'-phosphate (PNP) or pyridoxamine 5'-phosphate (PMP) into pyridoxal 5'-phosphate (PLP). This Edwardsiella ictaluri (strain 93-146) protein is Pyridoxine/pyridoxamine 5'-phosphate oxidase.